We begin with the raw amino-acid sequence, 40 residues long: Ribosome-inactivating protein saporin-1 (40 aa).

The protein belongs to the ribosome-inactivating protein family. Type 1 RIP subfamily.

The catalysed reaction is Endohydrolysis of the N-glycosidic bond at one specific adenosine on the 28S rRNA.. Its function is as follows. Ribosome-inactivating protein of type 1, inhibits protein synthesis in animal cells. This chain is Ribosome-inactivating protein saporin-1 (SAP1), found in Saponaria officinalis (Common soapwort).